We begin with the raw amino-acid sequence, 900 residues long: Protein translocase subunit SecA (900 aa).

Residues glutamine 87, 105–109, and aspartate 510 contribute to the ATP site; that span reads GEGKT. The tract at residues 857 to 890 is disordered; it reads DSLDSLSDGGSDSADGQEYPKVGRNEPCPCGSGK. Residues 860–872 show a composition bias toward low complexity; that stretch reads DSLSDGGSDSADG. Residues cysteine 884, cysteine 886, cysteine 895, and histidine 896 each coordinate Zn(2+).

It belongs to the SecA family. Monomer and homodimer. Part of the essential Sec protein translocation apparatus which comprises SecA, SecYEG and auxiliary proteins SecDF-YajC and YidC. Zn(2+) serves as cofactor.

The protein localises to the cell inner membrane. It localises to the cytoplasm. It catalyses the reaction ATP + H2O + cellular proteinSide 1 = ADP + phosphate + cellular proteinSide 2.. Part of the Sec protein translocase complex. Interacts with the SecYEG preprotein conducting channel. Has a central role in coupling the hydrolysis of ATP to the transfer of proteins into and across the cell membrane, serving both as a receptor for the preprotein-SecB complex and as an ATP-driven molecular motor driving the stepwise translocation of polypeptide chains across the membrane. This is Protein translocase subunit SecA from Marinomonas sp. (strain MWYL1).